The following is a 767-amino-acid chain: Cilium assembly protein DZIP1L (767 aa).

The interval 122–144 (QQRGQQELGRQADELKGVREESR) is disordered. Residues 131–144 (RQADELKGVREESR) show a composition bias toward basic and acidic residues. The C2H2-type zinc-finger motif lies at 166 to 189 (HTCHLCDKTFMNATFLRGHIQRRH). A coiled-coil region spans residues 205 to 406 (VEEVLEELRA…SQEEMIQSLS (202 aa)). Serine 426 carries the phosphoserine modification. Residues 518-767 (SRAKERQENG…SSGQPRVPAW (250 aa)) are disordered. Polar residues-rich tracts occupy residues 533–547 (PDGQ…STLV) and 574–588 (RQSH…TQVS). Residues 607 to 616 (GPGMSTPPFS) show a composition bias toward low complexity. The segment covering 658-675 (ENAQPPGQGSGTLVQSMV) has biased composition (polar residues). Over residues 677–686 (NLEKQLEAPA) the composition is skewed to basic and acidic residues.

The protein belongs to the DZIP C2H2-type zinc-finger protein family. As to quaternary structure, interacts with SEPTIN2.

The protein localises to the cytoplasm. It localises to the cytoskeleton. It is found in the cilium basal body. Its subcellular location is the microtubule organizing center. The protein resides in the centrosome. The protein localises to the centriole. Involved in primary cilium formation. Probably acts as a transition zone protein required for localization of PKD1/PC1 and PKD2/PC2 to the ciliary membrane. This is Cilium assembly protein DZIP1L from Homo sapiens (Human).